Reading from the N-terminus, the 199-residue chain is uncharacterized protein (199 aa).

Residues 1–30 (MEDAAAPGRTEGVLERQGAPPAAGQGGALV) form a disordered region. A coiled-coil region spans residues 71-101 (RANATNKLTVIAEQIQHLQEQARKVLEDAHR).

This is an uncharacterized protein from Homo sapiens (Human).